The chain runs to 156 residues: Small ribosomal subunit protein bS16 (156 aa).

A disordered region spans residues 114-156 (ENEPVAEAITPKKKKAAKADEAKAEDTAADAEAPAADAEAADK). Positions 130-139 (AKADEAKAED) are enriched in basic and acidic residues. Positions 143-156 (DAEAPAADAEAADK) are enriched in low complexity.

Belongs to the bacterial ribosomal protein bS16 family.

This Rhodococcus erythropolis (strain PR4 / NBRC 100887) protein is Small ribosomal subunit protein bS16.